Consider the following 290-residue polypeptide: Light-independent protochlorophyllide reductase iron-sulfur ATP-binding protein (290 aa).

ATP contacts are provided by residues 34–39 (GIGKST) and Lys-63. Ser-38 contacts Mg(2+). 2 residues coordinate [4Fe-4S] cluster: Cys-119 and Cys-153. ATP contacts are provided by residues 204-205 (NR) and 228-230 (PDL).

This sequence belongs to the NifH/BchL/ChlL family. As to quaternary structure, homodimer. Protochlorophyllide reductase is composed of three subunits; BchL, BchN and BchB. [4Fe-4S] cluster serves as cofactor.

It carries out the reaction chlorophyllide a + oxidized 2[4Fe-4S]-[ferredoxin] + 2 ADP + 2 phosphate = protochlorophyllide a + reduced 2[4Fe-4S]-[ferredoxin] + 2 ATP + 2 H2O. The protein operates within porphyrin-containing compound metabolism; bacteriochlorophyll biosynthesis (light-independent). In terms of biological role, component of the dark-operative protochlorophyllide reductase (DPOR) that uses Mg-ATP and reduced ferredoxin to reduce ring D of protochlorophyllide (Pchlide) to form chlorophyllide a (Chlide). This reaction is light-independent. The L component serves as a unique electron donor to the NB-component of the complex, and binds Mg-ATP. This is Light-independent protochlorophyllide reductase iron-sulfur ATP-binding protein from Rhodospirillum rubrum.